The chain runs to 356 residues: S-adenosylmethionine:tRNA ribosyltransferase-isomerase (356 aa).

This sequence belongs to the QueA family. As to quaternary structure, monomer.

It localises to the cytoplasm. The catalysed reaction is 7-aminomethyl-7-carbaguanosine(34) in tRNA + S-adenosyl-L-methionine = epoxyqueuosine(34) in tRNA + adenine + L-methionine + 2 H(+). Its pathway is tRNA modification; tRNA-queuosine biosynthesis. In terms of biological role, transfers and isomerizes the ribose moiety from AdoMet to the 7-aminomethyl group of 7-deazaguanine (preQ1-tRNA) to give epoxyqueuosine (oQ-tRNA). This Enterobacter sp. (strain 638) protein is S-adenosylmethionine:tRNA ribosyltransferase-isomerase.